The following is a 404-amino-acid chain: Tryptophan synthase beta chain (404 aa).

An N6-(pyridoxal phosphate)lysine modification is found at Lys95.

The protein belongs to the TrpB family. As to quaternary structure, tetramer of two alpha and two beta chains. Pyridoxal 5'-phosphate serves as cofactor.

The enzyme catalyses (1S,2R)-1-C-(indol-3-yl)glycerol 3-phosphate + L-serine = D-glyceraldehyde 3-phosphate + L-tryptophan + H2O. Its pathway is amino-acid biosynthesis; L-tryptophan biosynthesis; L-tryptophan from chorismate: step 5/5. Functionally, the beta subunit is responsible for the synthesis of L-tryptophan from indole and L-serine. This is Tryptophan synthase beta chain (trpB) from Thermus thermophilus (strain ATCC BAA-163 / DSM 7039 / HB27).